The chain runs to 151 residues: NADH dehydrogenase [ubiquinone] 1 beta subcomplex subunit 11, mitochondrial (151 aa).

Residues 1–29 (MAARLLSLYGRCLSAAGAMRGLPAARVRW) constitute a mitochondrion transit peptide. The interval 40–62 (GVEKKRQREPTMQWQEDPEPEDE) is disordered. The helical transmembrane segment at 87–107 (AVFFFGFSIVLVFGTTFVAYV) threads the bilayer.

Belongs to the complex I NDUFB11 subunit family. As to quaternary structure, complex I is composed of 45 different subunits. Interacts with BCAP31.

It is found in the mitochondrion inner membrane. Functionally, accessory subunit of the mitochondrial membrane respiratory chain NADH dehydrogenase (Complex I), that is believed not to be involved in catalysis. Complex I functions in the transfer of electrons from NADH to the respiratory chain. The immediate electron acceptor for the enzyme is believed to be ubiquinone. The protein is NADH dehydrogenase [ubiquinone] 1 beta subcomplex subunit 11, mitochondrial (Ndufb11) of Mus musculus (Mouse).